A 206-amino-acid chain; its full sequence is Two-component response regulator ARR7 (206 aa).

The region spanning 25-152 (HVLAVDDSIV…DVKRIKQLIM (128 aa)) is the Response regulatory domain. Asp-85 carries the 4-aspartylphosphate modification. The tract at residues 165-206 (SNKRKLQEDSDTSSSSHDDTSIKDSSCSKRMKSESENLFSLL) is disordered.

This sequence belongs to the ARR family. Type-A subfamily. In terms of processing, two-component system major event consists of a His-to-Asp phosphorelay between a sensor histidine kinase (HK) and a response regulator (RR). In plants, the His-to-Asp phosphorelay involves an additional intermediate named Histidine-containing phosphotransfer protein (HPt). This multistep phosphorelay consists of a His-Asp-His-Asp sequential transfer of a phosphate group between first a His and an Asp of the HK protein, followed by the transfer to a conserved His of the HPt protein and finally the transfer to an Asp in the receiver domain of the RR protein. Predominantly expressed in roots and young flowers.

Its subcellular location is the nucleus. In terms of biological role, functions as a response regulator involved in His-to-Asp phosphorelay signal transduction system. Phosphorylation of the Asp residue in the receiver domain activates the ability of the protein to promote the transcription of target genes. Type-A response regulators seem to act as negative regulators of the cytokinin signaling. The chain is Two-component response regulator ARR7 (ARR7) from Arabidopsis thaliana (Mouse-ear cress).